Consider the following 926-residue polypeptide: Probable zinc protease PqqL (926 aa).

His-79 is a Zn(2+) binding site. The active-site Proton acceptor is the Glu-82. 2 residues coordinate Zn(2+): His-83 and Glu-159.

Belongs to the peptidase M16 family. The cofactor is Zn(2+).

The polypeptide is Probable zinc protease PqqL (pqqL) (Haemophilus influenzae (strain ATCC 51907 / DSM 11121 / KW20 / Rd)).